A 102-amino-acid chain; its full sequence is MSLRDLKEENRIVIWPSYFFSPTRSKGRRLARIPYKIKTEELVSTLRELGLDPIVIENKKYPRDRKINFLIAVKKVKSKNYTLKIIHNALMGTRQTNPNKSN.

This sequence belongs to the SRP19 family. Part of the signal recognition particle protein translocation system, which is composed of SRP and FtsY. Archaeal SRP consists of a 7S RNA molecule of 300 nucleotides and two protein subunits: SRP54 and SRP19.

The protein resides in the cytoplasm. In terms of biological role, involved in targeting and insertion of nascent membrane proteins into the cytoplasmic membrane. Binds directly to 7S RNA and mediates binding of the 54 kDa subunit of the SRP. The polypeptide is Signal recognition particle 19 kDa protein (Saccharolobus solfataricus (strain ATCC 35092 / DSM 1617 / JCM 11322 / P2) (Sulfolobus solfataricus)).